The sequence spans 258 residues: Probable enoyl-CoA hydratase (258 aa).

Belongs to the enoyl-CoA hydratase/isomerase family.

The catalysed reaction is a (3S)-3-hydroxyacyl-CoA = a (2E)-enoyl-CoA + H2O. It catalyses the reaction a 4-saturated-(3S)-3-hydroxyacyl-CoA = a (3E)-enoyl-CoA + H2O. It functions in the pathway lipid metabolism; fatty acid beta-oxidation. Involved in the degradation of long-chain fatty acids. This is Probable enoyl-CoA hydratase (fadB) from Bacillus subtilis (strain 168).